Here is a 318-residue protein sequence, read N- to C-terminus: Putative enoyl-CoA hydratase EchA13 (318 aa).

The interval 90-110 is disordered; it reads LGSADDIRERSPGPDQHPSYR.

Belongs to the enoyl-CoA hydratase/isomerase family.

The chain is Putative enoyl-CoA hydratase EchA13 (echA13) from Mycobacterium tuberculosis (strain ATCC 25618 / H37Rv).